The following is a 252-amino-acid chain: Undecaprenyl-diphosphatase (252 aa).

Helical transmembrane passes span 1-21 (MTTL…FLPI), 42-62 (HKAF…FLYF), 74-94 (ILIA…IIKS), 95-115 (LFNP…LILI), 172-192 (AAEF…FYDV), 206-226 (NLIV…KWLL), and 232-252 (HSFI…YLWY).

Belongs to the UppP family.

Its subcellular location is the cell inner membrane. It carries out the reaction di-trans,octa-cis-undecaprenyl diphosphate + H2O = di-trans,octa-cis-undecaprenyl phosphate + phosphate + H(+). Catalyzes the dephosphorylation of undecaprenyl diphosphate (UPP). Confers resistance to bacitracin. The polypeptide is Undecaprenyl-diphosphatase (Sulfurihydrogenibium sp. (strain YO3AOP1)).